We begin with the raw amino-acid sequence, 407 residues long: Arrestin domain-containing protein 2 (407 aa).

Belongs to the arrestin family. In terms of assembly, interacts with WWP1 (via WW domains).

This is Arrestin domain-containing protein 2 (Arrdc2) from Mus musculus (Mouse).